A 356-amino-acid chain; its full sequence is Cyclin-D4-1 (356 aa).

It belongs to the cyclin family. Cyclin D subfamily.

The polypeptide is Cyclin-D4-1 (CYCD4-1) (Oryza sativa subsp. japonica (Rice)).